Consider the following 377-residue polypeptide: uncharacterized protein (377 aa).

The next 2 membrane-spanning stretches (helical) occupy residues 71–91 and 140–160; these read IIAT…LVGS and AEAA…PTLF.

Its subcellular location is the membrane. This is an uncharacterized protein from Coxiella burnetii (strain RSA 493 / Nine Mile phase I).